Here is a 238-residue protein sequence, read N- to C-terminus: ATP synthase subunit a (238 aa).

Helical transmembrane passes span 18 to 38 (TTNLISGLVSALIVFCVVFAL), 76 to 96 (FGLYAFTLFLFIFVSNQIGLF), 114 to 134 (PIVTLTLSLITMMLAHYSGVA), 150 to 170 (FKVWLPIGVFTEFIDFLTLGL), 188 to 208 (GIAFSGGIVNMIVAIPLALIW), and 211 to 231 (FSVFLGSIQAFVFVTLTSVYI).

The protein belongs to the ATPase A chain family. As to quaternary structure, F-type ATPases have 2 components, CF(1) - the catalytic core - and CF(0) - the membrane proton channel. CF(1) has five subunits: alpha(3), beta(3), gamma(1), delta(1), epsilon(1). CF(0) has three main subunits: a(1), b(2) and c(9-12). The alpha and beta chains form an alternating ring which encloses part of the gamma chain. CF(1) is attached to CF(0) by a central stalk formed by the gamma and epsilon chains, while a peripheral stalk is formed by the delta and b chains.

The protein resides in the cell membrane. Functionally, key component of the proton channel; it plays a direct role in the translocation of protons across the membrane. The polypeptide is ATP synthase subunit a (Pediococcus pentosaceus (strain ATCC 25745 / CCUG 21536 / LMG 10740 / 183-1w)).